The primary structure comprises 718 residues: Manganese-exporting P-type ATPase (718 aa).

The HMA domain occupies 11-78 (GRMRVKVDWV…AIKGAAHVAA (68 aa)). Transmembrane regions (helical) follow at residues 87 to 105 (HSAE…GGVA), 128 to 146 (TVAT…RGAL), 154 to 168 (AGTD…VASL), 177 to 191 (LTVL…YLQD), 327 to 351 (VGEN…LITG), and 357 to 375 (MTML…TPTA). The active-site 4-aspartylphosphate intermediate is the Asp-408. Residues Asp-408, Thr-410, and Asp-610 each coordinate Mg(2+). The next 2 helical transmembrane spans lie at 661 to 680 (AVDV…AAGL) and 690 to 709 (PVLA…ANSS).

The protein belongs to the cation transport ATPase (P-type) (TC 3.A.3) family. Type IB subfamily.

Its subcellular location is the cell membrane. It carries out the reaction Mn(2+)(in) + ATP + H2O = Mn(2+)(out) + ADP + phosphate + H(+). In terms of biological role, high affinity, slow turnover Mn(2+) transporting ATPase. The protein is Manganese-exporting P-type ATPase (ctpC) of Mycobacterium bovis (strain ATCC BAA-935 / AF2122/97).